The chain runs to 256 residues: MLNLYGREFSSRLMLGTAQYPSPAILRDAICKSGTEIITVSLRRESAGGKQGGQFWQFLQELDITILPNTAGCYTVKEAVTTAYLARDLFKTSWIKLEIIGNADTLQPNVFSLIEAAKILNSEGFHIFAYTTDDLIVAEKLLDVGCRVIMPWCAPIGSAKGPHHIDGLRSIRAYLPDVTLIVDAGIGRPSHAAVAMELGYDAVLLNTAVAKAGDPILMAEAFSKAIQAGRMGYKAGILEARNVAVPSTPVIGKAVF.

The active-site Schiff-base intermediate with DXP is K96. Residues G157, 184–185 (AG), and 206–207 (NT) each bind 1-deoxy-D-xylulose 5-phosphate.

It belongs to the ThiG family. In terms of assembly, homotetramer. Forms heterodimers with either ThiH or ThiS.

Its subcellular location is the cytoplasm. It catalyses the reaction [ThiS sulfur-carrier protein]-C-terminal-Gly-aminoethanethioate + 2-iminoacetate + 1-deoxy-D-xylulose 5-phosphate = [ThiS sulfur-carrier protein]-C-terminal Gly-Gly + 2-[(2R,5Z)-2-carboxy-4-methylthiazol-5(2H)-ylidene]ethyl phosphate + 2 H2O + H(+). It functions in the pathway cofactor biosynthesis; thiamine diphosphate biosynthesis. Catalyzes the rearrangement of 1-deoxy-D-xylulose 5-phosphate (DXP) to produce the thiazole phosphate moiety of thiamine. Sulfur is provided by the thiocarboxylate moiety of the carrier protein ThiS. In vitro, sulfur can be provided by H(2)S. The protein is Thiazole synthase of Bartonella tribocorum (strain CIP 105476 / IBS 506).